A 332-amino-acid polypeptide reads, in one-letter code: L-lactate dehydrogenase A chain (332 aa).

Residues 29–57 (GAVGMACAISILMKDLADELALVDVVEDK) and Arg99 each bind NAD(+). Residues Arg106, Asn138, and Arg169 each contribute to the substrate site. Asn138 contacts NAD(+). The active-site Proton acceptor is the His193. Substrate is bound at residue Thr248.

It belongs to the LDH/MDH superfamily. LDH family. As to quaternary structure, homotetramer.

The protein localises to the cytoplasm. The catalysed reaction is (S)-lactate + NAD(+) = pyruvate + NADH + H(+). The protein operates within fermentation; pyruvate fermentation to lactate; (S)-lactate from pyruvate: step 1/1. Interconverts simultaneously and stereospecifically pyruvate and lactate with concomitant interconversion of NADH and NAD(+). This is L-lactate dehydrogenase A chain (LDHA) from Columba livia (Rock dove).